Consider the following 501-residue polypeptide: Maturase K (501 aa).

It belongs to the intron maturase 2 family. MatK subfamily.

Its subcellular location is the plastid. The protein localises to the chloroplast. In terms of biological role, usually encoded in the trnK tRNA gene intron. Probably assists in splicing its own and other chloroplast group II introns. This is Maturase K from Amborella trichopoda.